The chain runs to 145 residues: MELHTLKATPGSRKAKHRVGRGHAAGKGKQAGRGQSGQTKRSTVRLGFEGGQLPLFRRIPKRGFNNVNHVEYQTVNLVDLENKYSTGEVVSYETLLAKGLIKRNLPVKILAKGTLTKKLTIEIPTLSQSAKTAIEKVGGTIIEVK.

Positions 1–42 (MELHTLKATPGSRKAKHRVGRGHAAGKGKQAGRGQSGQTKRS) are disordered. Positions 13–26 (RKAKHRVGRGHAAG) are enriched in basic residues.

It belongs to the universal ribosomal protein uL15 family. In terms of assembly, part of the 50S ribosomal subunit.

Its function is as follows. Binds to the 23S rRNA. This Metamycoplasma arthritidis (strain 158L3-1) (Mycoplasma arthritidis) protein is Large ribosomal subunit protein uL15.